The following is a 259-amino-acid chain: Ribosomal RNA small subunit methyltransferase J (259 aa).

S-adenosyl-L-methionine-binding positions include 107–108, 123–124, 159–160, and Asp-177; these read RD, ER, and SS.

Belongs to the methyltransferase superfamily. RsmJ family.

It is found in the cytoplasm. It catalyses the reaction guanosine(1516) in 16S rRNA + S-adenosyl-L-methionine = N(2)-methylguanosine(1516) in 16S rRNA + S-adenosyl-L-homocysteine + H(+). Functionally, specifically methylates the guanosine in position 1516 of 16S rRNA. This Shewanella loihica (strain ATCC BAA-1088 / PV-4) protein is Ribosomal RNA small subunit methyltransferase J.